A 455-amino-acid polypeptide reads, in one-letter code: Kynurenine 3-monooxygenase (455 aa).

It belongs to the aromatic-ring hydroxylase family. KMO subfamily. FAD is required as a cofactor.

The enzyme catalyses L-kynurenine + NADPH + O2 + H(+) = 3-hydroxy-L-kynurenine + NADP(+) + H2O. Its pathway is cofactor biosynthesis; NAD(+) biosynthesis; quinolinate from L-kynurenine: step 1/3. Its function is as follows. Catalyzes the hydroxylation of L-kynurenine (L-Kyn) to form 3-hydroxy-L-kynurenine (L-3OHKyn). Required for synthesis of quinolinic acid. The sequence is that of Kynurenine 3-monooxygenase from Xanthomonas axonopodis pv. citri (strain 306).